Here is a 190-residue protein sequence, read N- to C-terminus: Large ribosomal subunit protein uL6 (190 aa).

Belongs to the universal ribosomal protein uL6 family.

The polypeptide is Large ribosomal subunit protein uL6 (RpL9) (Drosophila melanogaster (Fruit fly)).